The sequence spans 213 residues: Probable glutathione S-transferase DHAR1, cytosolic (213 aa).

K8 and D19 together coordinate glutathione. Residues K8 and D19 each contribute to the L-ascorbate site. In terms of domain architecture, GST N-terminal spans 10-89; the sequence is AVGHPDTLGD…VIEEKYPTPS (80 aa). Catalysis depends on C20, which acts as the Nucleophile. Residues K47, V60, S74, H160, and W207 each coordinate glutathione. In terms of domain architecture, GST C-terminal spans 73–213; the sequence is DSDVITQVIE…IAGWAPKVNA (141 aa). An L-ascorbate-binding site is contributed by K210.

It belongs to the GST superfamily. DHAR family. Monomer.

The protein localises to the cytoplasm. Its subcellular location is the cytosol. It catalyses the reaction RX + glutathione = an S-substituted glutathione + a halide anion + H(+). The enzyme catalyses L-dehydroascorbate + 2 glutathione = glutathione disulfide + L-ascorbate. In terms of biological role, involved in ascorbate homeostasis. Maintains redox pools of ascorbate by recycling dihydroascorbate (DHA) to ascorbate. Involved in scavenging reactive oxygen species (ROS) under oxidative stresses. Possesses dehydroascorbate reductase (DHAR) activity in vitro. May function via a ping-pong reaction mechanism with an electron transfer at the active site. Possesses chaperone-like activity in vitro. The chain is Probable glutathione S-transferase DHAR1, cytosolic from Oryza sativa subsp. japonica (Rice).